The chain runs to 128 residues: Azurin (128 aa).

Positions 1–128 (ACDVSIEGND…IMKGTIELGS (128 aa)) constitute a Plastocyanin-like domain. A disulfide bond links C2 and C25. H45, C111, H116, and M120 together coordinate Cu cation.

As to quaternary structure, monomer. Interacts with the AAUA/AAUB heterotetramer complex. Cu cation serves as cofactor.

It is found in the periplasm. Functionally, transfers electrons from cytochrome c551 to cytochrome oxidase. Transfers electrons from the tryptophan tryptophylquinone of the aromatic amine dehydrogenase heterotetramer. This is Azurin from Alcaligenes faecalis.